The following is a 126-amino-acid chain: Small ribosomal subunit protein eS6 (126 aa).

Belongs to the eukaryotic ribosomal protein eS6 family.

The protein is Small ribosomal subunit protein eS6 of Methanothermobacter thermautotrophicus (strain ATCC 29096 / DSM 1053 / JCM 10044 / NBRC 100330 / Delta H) (Methanobacterium thermoautotrophicum).